Here is a 572-residue protein sequence, read N- to C-terminus: Urease subunit alpha (572 aa).

The Urease domain occupies Gly134–Phe572. Residues His139, His141, and Lys222 each contribute to the Ni(2+) site. An N6-carboxylysine modification is found at Lys222. His224 lines the substrate pocket. Ni(2+)-binding residues include His251 and His277. The active-site Proton donor is His325. Residue Asp365 participates in Ni(2+) binding.

The protein belongs to the metallo-dependent hydrolases superfamily. Urease alpha subunit family. As to quaternary structure, heterotrimer of UreA (gamma), UreB (beta) and UreC (alpha) subunits. Three heterotrimers associate to form the active enzyme. Requires Ni cation as cofactor. Post-translationally, carboxylation allows a single lysine to coordinate two nickel ions.

It is found in the cytoplasm. It catalyses the reaction urea + 2 H2O + H(+) = hydrogencarbonate + 2 NH4(+). Its pathway is nitrogen metabolism; urea degradation; CO(2) and NH(3) from urea (urease route): step 1/1. The sequence is that of Urease subunit alpha from Variovorax paradoxus (strain S110).